Reading from the N-terminus, the 364-residue chain is D-alanine--D-alanine ligase (364 aa).

In terms of domain architecture, ATP-grasp spans Lys146–Leu352. Thr179–Glu234 is an ATP binding site. Asp305, Glu319, and Asn321 together coordinate Mg(2+).

Belongs to the D-alanine--D-alanine ligase family. Mg(2+) serves as cofactor. The cofactor is Mn(2+).

The protein localises to the cytoplasm. It carries out the reaction 2 D-alanine + ATP = D-alanyl-D-alanine + ADP + phosphate + H(+). The protein operates within cell wall biogenesis; peptidoglycan biosynthesis. Functionally, cell wall formation. This chain is D-alanine--D-alanine ligase, found in Chlorobaculum parvum (strain DSM 263 / NCIMB 8327) (Chlorobium vibrioforme subsp. thiosulfatophilum).